Here is a 703-residue protein sequence, read N- to C-terminus: Putative glycosyl hydrolase ecdE (703 aa).

A signal peptide spans 1–21 (MKLNIFASAILLCTSAFPVAA). Residue D47 is part of the active site. N-linked (GlcNAc...) asparagine glycans are attached at residues N104, N120, N293, N397, N443, and N641.

It belongs to the glycosyl hydrolase 32 family.

The polypeptide is Putative glycosyl hydrolase ecdE (Aspergillus rugulosus (Emericella rugulosa)).